Consider the following 295-residue polypeptide: MSKDIATPGRTTEILKKYGFLFKKSLGQNFLIDSNILTRITDTAEITKETNVIEIGPGIGALTEQLAKTANEVVAFEIDQRLLPILDDTLSAYNNIQVVHGDVLKADVEEVIAEQFAKPDLPLKIVANLPYYVTTPIILKLLHDNIPADSMTFMLQKEVADRISAVPSTKSYGSLTIAIQFYMEAELAFIVPKTVFMPQPNVDSAVIHLKRRKEPLAEVNDEEFFFEVTRASFAQRRKTLWNNLASKFPALKPRKDELVEGLNAIGIDLIRRGETLDIPEFAKLSNFLGDFLKEK.

Positions 29, 31, 56, 77, 102, and 128 each coordinate S-adenosyl-L-methionine.

The protein belongs to the class I-like SAM-binding methyltransferase superfamily. rRNA adenine N(6)-methyltransferase family. RsmA subfamily.

The protein resides in the cytoplasm. It catalyses the reaction adenosine(1518)/adenosine(1519) in 16S rRNA + 4 S-adenosyl-L-methionine = N(6)-dimethyladenosine(1518)/N(6)-dimethyladenosine(1519) in 16S rRNA + 4 S-adenosyl-L-homocysteine + 4 H(+). Specifically dimethylates two adjacent adenosines (A1518 and A1519) in the loop of a conserved hairpin near the 3'-end of 16S rRNA in the 30S particle. May play a critical role in biogenesis of 30S subunits. The sequence is that of Ribosomal RNA small subunit methyltransferase A from Listeria monocytogenes serotype 4b (strain CLIP80459).